A 198-amino-acid polypeptide reads, in one-letter code: Recombination protein RecR (198 aa).

The segment at Cys-59–Cys-74 adopts a C4-type zinc-finger fold. The 94-residue stretch at Thr-82–Pro-175 folds into the Toprim domain.

The protein belongs to the RecR family.

In terms of biological role, may play a role in DNA repair. It seems to be involved in an RecBC-independent recombinational process of DNA repair. It may act with RecF and RecO. This Desulfitobacterium hafniense (strain DSM 10664 / DCB-2) protein is Recombination protein RecR.